The primary structure comprises 1539 residues: Lysine-specific demethylase 5D (1539 aa).

The JmjN domain occupies 14–55 (CPVFEPSWAEFQDPLGYIAKIRPIAEKSGICKIRPPADWQPP). The ARID domain maps to 79–169 (TRVKLNYLDQ…IIYPYEMFQS (91 aa)). Residues 192–228 (PHSIPLRQSVQPSKFSSYSRRAKRLQPDPEPTEEDIE) form a disordered region. The segment covering 197–210 (LRQSVQPSKFSSYS) has biased composition (polar residues). Glycyl lysine isopeptide (Lys-Gly) (interchain with G-Cter in SUMO2) cross-links involve residues lysine 205, lysine 229, lysine 244, and lysine 272. A phosphoserine mark is found at serine 291 and serine 307. The PHD-type 1 zinc-finger motif lies at 316–362 (ICQVCSRGDEDDKLLFCDGCDDNYHIFCLLPPLPEIPRGIWRCPKCI). Position 430 (tyrosine 430) interacts with 2-oxoglutarate. One can recognise a JmjC domain in the interval 458-624 (EYATSGWNLN…AGRQCIEHYR (167 aa)). Fe cation-binding residues include histidine 504 and glutamate 506. 3 residues coordinate 2-oxoglutarate: serine 512, asparagine 514, and lysine 522. Histidine 592 serves as a coordination point for Fe cation. The segment at 697–749 (CIKCKTTCFLSALACYDCPDGLVCLSHINDLCKCSSSRQYLRYRYTLDELPTM) adopts a C5HC2 zinc-finger fold. A Phosphoserine modification is found at serine 884. A PHD-type 2 zinc finger spans residues 1174 to 1235 (ICVCGQVPAG…DTKFLCPLCM (62 aa)). A Phosphoserine modification is found at serine 1346. Positions 1429-1521 (HQGSRTRSRA…QHKDSGSSAA (93 aa)) are disordered. Basic residues predominate over residues 1432–1446 (SRTRSRALERRRRRQ). Over residues 1477-1491 (GREEEHYQEKADREN) the composition is skewed to basic and acidic residues. The segment covering 1494 to 1521 (LTPSTDHSPFLKGNQNSLQHKDSGSSAA) has biased composition (polar residues).

The protein belongs to the JARID1 histone demethylase family. Interacts with PCGF6, MSH5, ZMYND8, AR. The cofactor is L-ascorbate. Requires Fe(2+) as cofactor. Expression is highly down-regulated in metastatic prostate tumors.

The protein resides in the nucleus. The catalysed reaction is N(6),N(6),N(6)-trimethyl-L-lysyl(4)-[histone H3] + 3 2-oxoglutarate + 3 O2 = L-lysyl(4)-[histone H3] + 3 formaldehyde + 3 succinate + 3 CO2. Histone demethylase that specifically demethylates 'Lys-4' of histone H3, thereby playing a central role in histone code. Does not demethylate histone H3 'Lys-9', H3 'Lys-27', H3 'Lys-36', H3 'Lys-79' or H4 'Lys-20'. Demethylates trimethylated and dimethylated but not monomethylated H3 'Lys-4'. May play a role in spermatogenesis. Involved in transcriptional repression of diverse metastasis-associated genes; in this function seems to cooperate with ZMYND8. Suppresses prostate cancer cell invasion. Regulates androgen receptor (AR) transcriptional activity by demethylating H3K4me3 active transcription marks. The chain is Lysine-specific demethylase 5D (KDM5D) from Homo sapiens (Human).